Consider the following 447-residue polypeptide: Tol-Pal system protein TolB (447 aa).

Residues 1–29 (MITMSRIRSLAAFAVFVILGVAAVLPAQA) form the signal peptide.

It belongs to the TolB family. As to quaternary structure, the Tol-Pal system is composed of five core proteins: the inner membrane proteins TolA, TolQ and TolR, the periplasmic protein TolB and the outer membrane protein Pal. They form a network linking the inner and outer membranes and the peptidoglycan layer.

It localises to the periplasm. Functionally, part of the Tol-Pal system, which plays a role in outer membrane invagination during cell division and is important for maintaining outer membrane integrity. In Paramagnetospirillum magneticum (strain ATCC 700264 / AMB-1) (Magnetospirillum magneticum), this protein is Tol-Pal system protein TolB.